The sequence spans 117 residues: Small ribosomal subunit protein bS6 (117 aa).

This sequence belongs to the bacterial ribosomal protein bS6 family.

Binds together with bS18 to 16S ribosomal RNA. The protein is Small ribosomal subunit protein bS6 of Roseobacter denitrificans (strain ATCC 33942 / OCh 114) (Erythrobacter sp. (strain OCh 114)).